The following is a 200-amino-acid chain: Prolactin-2 (200 aa).

Residues 1–23 (MRQRRISGSNLMMVLCVVAMCRA) form the signal peptide. Disulfide bonds link Cys64/Cys173 and Cys190/Cys200.

Belongs to the somatotropin/prolactin family.

It is found in the secreted. The protein is Prolactin-2 (prl2) of Oreochromis mossambicus (Mozambique tilapia).